Reading from the N-terminus, the 188-residue chain is Elongation factor P-like protein (188 aa).

This sequence belongs to the elongation factor P family.

The sequence is that of Elongation factor P-like protein from Xylella fastidiosa (strain M23).